The chain runs to 130 residues: Sirohydrochlorin cobaltochelatase (130 aa).

Catalysis depends on His-12, which acts as the Proton acceptor. Co(2+) is bound at residue His-12. His-12 provides a ligand contact to Ni(2+). Substrate-binding positions include Glu-48 and 73 to 78; that span reads LASGVH. A Co(2+)-binding site is contributed by His-78. His-78 is a Ni(2+) binding site.

The protein belongs to the CbiX family. CbiXS subfamily. As to quaternary structure, homotetramer; dimer of dimers.

It carries out the reaction Co-sirohydrochlorin + 2 H(+) = sirohydrochlorin + Co(2+). The catalysed reaction is Ni-sirohydrochlorin + 2 H(+) = sirohydrochlorin + Ni(2+). It participates in cofactor biosynthesis; adenosylcobalamin biosynthesis; cob(II)yrinate a,c-diamide from sirohydrochlorin (anaerobic route): step 1/10. Catalyzes the insertion of Co(2+) into sirohydrochlorin as part of the anaerobic pathway to cobalamin biosynthesis (Potential). Involved in the biosynthesis of the unique nickel-containing tetrapyrrole coenzyme F430, the prosthetic group of methyl-coenzyme M reductase (MCR), which plays a key role in methanogenesis and anaerobic methane oxidation. Catalyzes the insertion of Ni(2+) into sirohydrochlorin to yield Ni-sirohydrochlorin. The sequence is that of Sirohydrochlorin cobaltochelatase from Methanosarcina acetivorans (strain ATCC 35395 / DSM 2834 / JCM 12185 / C2A).